Consider the following 795-residue polypeptide: ATP-dependent RNA helicase DHX15 (795 aa).

The disordered stretch occupies residues 1-108 (MSKRHRLDLG…HSTHAGHAGH (108 aa)). A Phosphoserine modification is found at Ser15. The span at 20-62 (AGTDGKDRDRDRDREDRSKDRDRERDRGDREREREKEKEKELR) shows a compositional bias: basic and acidic residues. Residues 79-108 (ASHSAHSTHSAHSTHSTHSAHSTHAGHAGH) show a composition bias toward low complexity. One can recognise a Helicase ATP-binding domain in the interval 147–313 (TDILVRHQSF…FDNCPLLTIP (167 aa)). ATP is bound at residue 160 to 167 (GETGSGKT). The DEAH box signature appears at 260–263 (DEAH). A Helicase C-terminal domain is found at 338-518 (TVIQIHMCEE…SVVLQLKKLG (181 aa)). Lys488 carries the N6-acetyllysine modification. Lys786 participates in a covalent cross-link: Glycyl lysine isopeptide (Lys-Gly) (interchain with G-Cter in SUMO2).

The protein belongs to the DEAD box helicase family. DEAH subfamily. DDX15/PRP43 sub-subfamily. In terms of assembly, component of the U11/U12 snRNPs that are part of the U12-type spliceosome. Identified in the Intron Large spliceosome complex (IL, also named intron lariat spliceosome), a post-mRNA release spliceosomal complex containing the excised intron, U2, U5 and U6 snRNPs, and splicing factors; the association may be transient. The IL complex exists in two distinct conformations, one with the DHX15 (ILS2) and one without (ILS1). Interacts with TFIP11 (via G-patch domain); indicative for a recruitment to the IL complex. Interacts with SSB/La. Interacts with GPATCH2 (via G-patch domain); promoting the RNA helicase activity. Interacts with NKRF (via G-patch domain); promoting the RNA helicase activity. Interacts with NLRP6. In terms of tissue distribution, ubiquitous.

The protein resides in the nucleus. It localises to the nucleolus. The catalysed reaction is ATP + H2O = ADP + phosphate + H(+). ATPase activity is enhanced upon binding to G-patch domain-containing proteins. G-patch domain-containing proteins act like a brace that tethers mobile sections of DHX15 together, stabilizing a functional conformation with high RNA affinity, thereby promoting the ATPase activity. In terms of biological role, RNA helicase involved in mRNA processing and antiviral innate immunity. Pre-mRNA processing factor involved in disassembly of spliceosomes after the release of mature mRNA. In cooperation with TFIP11 seem to be involved in the transition of the U2, U5 and U6 snRNP-containing IL complex to the snRNP-free IS complex leading to efficient debranching and turnover of excised introns. Plays a key role in antiviral innate immunity by promoting both MAVS-dependent signaling and NLRP6 inflammasome. Acts as an RNA virus sensor: recognizes and binds viral double stranded RNA (dsRNA) and activates the MAVS-dependent signaling to produce interferon-beta and interferon lambda-3 (IFNL3). Involved in intestinal antiviral innate immunity together with NLRP6: recognizes and binds viral dsRNA and promotes activation of the NLRP6 inflammasome in intestinal epithelial cells to restrict infection by enteric viruses. The NLRP6 inflammasome acts by promoting maturation and secretion of IL18 in the extracellular milieu. Also involved in antibacterial innate immunity by promoting Wnt-induced antimicrobial protein expression in Paneth cells. This is ATP-dependent RNA helicase DHX15 from Homo sapiens (Human).